Here is a 653-residue protein sequence, read N- to C-terminus: Chromosomal replication initiator protein DnaA (653 aa).

The domain I, interacts with DnaA modulators stretch occupies residues 1–100; it reads MADVPADLAA…SAGEPPASAS (100 aa). Residues 86–310 form a disordered region; it reads ITVDDSAGEP…PAPATGPGEP (225 aa). Positions 101–312 are domain II; that stretch reads PAPPRYEEPE…PATGPGEPTA (212 aa). Basic and acidic residues-rich tracts occupy residues 120–150 and 221–267; these read DPYESRGREGYEGYGRHRADDHRQGHNDRHQ and PSYD…RRNI. Positions 284–310 are enriched in low complexity; the sequence is GSALPASSGAPGPLAAQPAPATGPGEP. The segment at 313-529 is domain III, AAA+ region; the sequence is RLNPKYLFDT…GALIRVTAFA (217 aa). 4 residues coordinate ATP: Gly357, Gly359, Lys360, and Thr361. The segment at 530–653 is domain IV, binds dsDNA; it reads SLNRQPVDLG…TELTNRIKNG (124 aa).

Belongs to the DnaA family. In terms of assembly, oligomerizes as a right-handed, spiral filament on DNA at oriC.

It localises to the cytoplasm. Functionally, plays an essential role in the initiation and regulation of chromosomal replication. ATP-DnaA binds to the origin of replication (oriC) to initiate formation of the DNA replication initiation complex once per cell cycle. Binds the DnaA box (a 9 base pair repeat at the origin) and separates the double-stranded (ds)DNA. Forms a right-handed helical filament on oriC DNA; dsDNA binds to the exterior of the filament while single-stranded (ss)DNA is stabiized in the filament's interior. The ATP-DnaA-oriC complex binds and stabilizes one strand of the AT-rich DNA unwinding element (DUE), permitting loading of DNA polymerase. After initiation quickly degrades to an ADP-DnaA complex that is not apt for DNA replication. Binds acidic phospholipids. This Streptomyces avermitilis (strain ATCC 31267 / DSM 46492 / JCM 5070 / NBRC 14893 / NCIMB 12804 / NRRL 8165 / MA-4680) protein is Chromosomal replication initiator protein DnaA.